We begin with the raw amino-acid sequence, 183 residues long: NADH-quinone oxidoreductase subunit B (183 aa).

Positions 60, 61, 125, and 154 each coordinate [4Fe-4S] cluster.

It belongs to the complex I 20 kDa subunit family. In terms of assembly, NDH-1 is composed of 14 different subunits. Subunits NuoB, C, D, E, F, and G constitute the peripheral sector of the complex. The cofactor is [4Fe-4S] cluster.

Its subcellular location is the cell inner membrane. The catalysed reaction is a quinone + NADH + 5 H(+)(in) = a quinol + NAD(+) + 4 H(+)(out). In terms of biological role, NDH-1 shuttles electrons from NADH, via FMN and iron-sulfur (Fe-S) centers, to quinones in the respiratory chain. The immediate electron acceptor for the enzyme in this species is believed to be ubiquinone. Couples the redox reaction to proton translocation (for every two electrons transferred, four hydrogen ions are translocated across the cytoplasmic membrane), and thus conserves the redox energy in a proton gradient. This Desulfovibrio desulfuricans (strain ATCC 27774 / DSM 6949 / MB) protein is NADH-quinone oxidoreductase subunit B.